The following is a 1161-amino-acid chain: ATP-dependent helicase/deoxyribonuclease subunit B (1161 aa).

This sequence belongs to the helicase family. AddB/RexB type 2 subfamily. In terms of assembly, heterodimer of AddA and RexB. Mg(2+) is required as a cofactor.

Functionally, the heterodimer acts as both an ATP-dependent DNA helicase and an ATP-dependent, dual-direction single-stranded exonuclease. Recognizes the chi site generating a DNA molecule suitable for the initiation of homologous recombination. This subunit has 5' -&gt; 3' nuclease activity but not helicase activity. This is ATP-dependent helicase/deoxyribonuclease subunit B from Oenococcus oeni (strain ATCC BAA-331 / PSU-1).